The chain runs to 258 residues: Thiazole synthase (258 aa).

The active-site Schiff-base intermediate with DXP is Lys98. Residues Gly159, Ala185–Gly186, and Asn207–Thr208 contribute to the 1-deoxy-D-xylulose 5-phosphate site.

The protein belongs to the ThiG family. As to quaternary structure, homotetramer. Forms heterodimers with either ThiH or ThiS.

The protein resides in the cytoplasm. The enzyme catalyses [ThiS sulfur-carrier protein]-C-terminal-Gly-aminoethanethioate + 2-iminoacetate + 1-deoxy-D-xylulose 5-phosphate = [ThiS sulfur-carrier protein]-C-terminal Gly-Gly + 2-[(2R,5Z)-2-carboxy-4-methylthiazol-5(2H)-ylidene]ethyl phosphate + 2 H2O + H(+). Its pathway is cofactor biosynthesis; thiamine diphosphate biosynthesis. Functionally, catalyzes the rearrangement of 1-deoxy-D-xylulose 5-phosphate (DXP) to produce the thiazole phosphate moiety of thiamine. Sulfur is provided by the thiocarboxylate moiety of the carrier protein ThiS. In vitro, sulfur can be provided by H(2)S. This Bacillus cereus (strain ZK / E33L) protein is Thiazole synthase.